Here is a 580-residue protein sequence, read N- to C-terminus: Netrin-3 (580 aa).

Residues 1–27 (MPGWPWGLLLTAGTLFAALSPGPPAPA) form the signal peptide. Residues 36–254 (APRGCVPGLV…AATDLQVGGR (219 aa)) form the Laminin N-terminal domain. Residues 62–83 (PATRACDASDPRRAHSPALLTS) are disordered. 15 disulfides stabilise this stretch: Cys-92–Cys-125, Cys-255–Cys-264, Cys-257–Cys-274, Cys-276–Cys-285, Cys-288–Cys-308, Cys-311–Cys-320, Cys-313–Cys-338, Cys-341–Cys-350, Cys-353–Cys-371, Cys-374–Cys-386, Cys-376–Cys-393, Cys-395–Cys-404, Cys-407–Cys-421, Cys-441–Cys-514, and Cys-460–Cys-577. N-linked (GlcNAc...) asparagine glycosylation occurs at Asn-104. 3 Laminin EGF-like domains span residues 255 to 308 (CKCN…SHAC), 311 to 371 (CSCN…RRAC), and 374 to 421 (CDCH…VAPC). Asn-387 is a glycosylation site (N-linked (GlcNAc...) asparagine). The 137-residue stretch at 441–577 (CDSHCKPARG…LQRRERRGRC (137 aa)) folds into the NTR domain. The Cell attachment site; atypical motif lies at 500–502 (RGS).

In terms of tissue distribution, spinal cord.

The protein localises to the secreted. It localises to the extracellular space. Its subcellular location is the extracellular matrix. Its function is as follows. Netrins control guidance of CNS commissural axons and peripheral motor axons. This chain is Netrin-3 (NTN3), found in Homo sapiens (Human).